The following is a 576-amino-acid chain: Arginine--tRNA ligase (576 aa).

The short motif at 122–132 is the 'HIGH' region element; the sequence is PNVAKEMHVGH.

This sequence belongs to the class-I aminoacyl-tRNA synthetase family. In terms of assembly, monomer.

The protein localises to the cytoplasm. It catalyses the reaction tRNA(Arg) + L-arginine + ATP = L-arginyl-tRNA(Arg) + AMP + diphosphate. This Hamiltonella defensa subsp. Acyrthosiphon pisum (strain 5AT) protein is Arginine--tRNA ligase.